The primary structure comprises 178 residues: ATP-dependent protease subunit HslV (178 aa).

Residue Thr7 is part of the active site. Residues Gly162, Cys165, and Thr168 each coordinate Na(+).

This sequence belongs to the peptidase T1B family. HslV subfamily. In terms of assembly, a double ring-shaped homohexamer of HslV is capped on each side by a ring-shaped HslU homohexamer. The assembly of the HslU/HslV complex is dependent on binding of ATP.

Its subcellular location is the cytoplasm. The catalysed reaction is ATP-dependent cleavage of peptide bonds with broad specificity.. Allosterically activated by HslU binding. Functionally, protease subunit of a proteasome-like degradation complex believed to be a general protein degrading machinery. The sequence is that of ATP-dependent protease subunit HslV from Ralstonia nicotianae (strain ATCC BAA-1114 / GMI1000) (Ralstonia solanacearum).